The sequence spans 158 residues: NAD(P)H-quinone oxidoreductase subunit J, chloroplastic (158 aa).

Belongs to the complex I 30 kDa subunit family. NDH is composed of at least 16 different subunits, 5 of which are encoded in the nucleus.

The protein localises to the plastid. It is found in the chloroplast thylakoid membrane. It catalyses the reaction a plastoquinone + NADH + (n+1) H(+)(in) = a plastoquinol + NAD(+) + n H(+)(out). The catalysed reaction is a plastoquinone + NADPH + (n+1) H(+)(in) = a plastoquinol + NADP(+) + n H(+)(out). In terms of biological role, NDH shuttles electrons from NAD(P)H:plastoquinone, via FMN and iron-sulfur (Fe-S) centers, to quinones in the photosynthetic chain and possibly in a chloroplast respiratory chain. The immediate electron acceptor for the enzyme in this species is believed to be plastoquinone. Couples the redox reaction to proton translocation, and thus conserves the redox energy in a proton gradient. In Jasminum nudiflorum (Winter jasmine), this protein is NAD(P)H-quinone oxidoreductase subunit J, chloroplastic.